A 465-amino-acid chain; its full sequence is Trigger factor (465 aa).

The PPIase FKBP-type domain maps to 163–248 (GDVINFNFKG…INKIKENQPA (86 aa)). The disordered stretch occupies residues 431–465 (EIVNKNQNDNEIEQDKEQKDNNEEKIKQENNLENK). Positions 443 to 465 (EQDKEQKDNNEEKIKQENNLENK) are enriched in basic and acidic residues.

Belongs to the FKBP-type PPIase family. Tig subfamily.

The protein resides in the cytoplasm. The enzyme catalyses [protein]-peptidylproline (omega=180) = [protein]-peptidylproline (omega=0). Involved in protein export. Acts as a chaperone by maintaining the newly synthesized protein in an open conformation. Functions as a peptidyl-prolyl cis-trans isomerase. The chain is Trigger factor from Mesomycoplasma hyopneumoniae (strain J / ATCC 25934 / NCTC 10110) (Mycoplasma hyopneumoniae).